We begin with the raw amino-acid sequence, 182 residues long: UPF0316 protein lp_1140 (182 aa).

The next 3 helical transmembrane spans lie at 1 to 21 (MHID…YITL), 36 to 56 (FAAF…SLVL), and 62 to 82 (PINL…GMVI).

Belongs to the UPF0316 family.

The protein resides in the cell membrane. This chain is UPF0316 protein lp_1140, found in Lactiplantibacillus plantarum (strain ATCC BAA-793 / NCIMB 8826 / WCFS1) (Lactobacillus plantarum).